The following is a 251-amino-acid chain: Capsid protein (251 aa).

Residues 3-20 (KRDAPWRLMAGTSKVSRS) carry the Bipartite nuclear localization signal motif. The Nuclear localization signal signature appears at 35–49 (KAAAWVNRPMYRKPR). A zinc finger spans residues 63–80 (CEGPCKVQSYEQRHDISH). The Nuclear export signal motif lies at 96–117 (ITHRVGKRFCVKSVYILGKIWM). A Bipartite nuclear localization signal motif is present at residues 195–242 (RRFWKVNNHVVYNHQEAGKYENHTENALLLYMACTHASNPVYATLKIR).

This sequence belongs to the geminiviridae capsid protein family. In terms of assembly, homomultimer. Binds to single-stranded and double-stranded viral DNA. Interacts (via nuclear localization signals) with host importin alpha-1a.

Its subcellular location is the virion. The protein resides in the host nucleus. Encapsidates the viral DNA into characteristic twinned ('geminate') particles. Binds the genomic viral ssDNA and shuttles it into and out of the cell nucleus. The CP of bipartite geminiviruses is not required for cell-to-cell or systemic movement. This chain is Capsid protein, found in Squash leaf curl virus (SLCV).